Here is a 1505-residue protein sequence, read N- to C-terminus: Phosphatidylinositol 3-kinase C2 domain-containing subunit gamma (1505 aa).

The interval 1–32 is disordered; the sequence is MAYNWQTEPNRAEPQEGGHDHQQCHHADQHLS. Positions 10–31 are enriched in basic and acidic residues; that stretch reads NRAEPQEGGHDHQQCHHADQHL. Residues 278 to 370 form the PI3K-RBD domain; the sequence is PSRLFADTQF…IQLHLQRSRD (93 aa). The region spanning 540 to 688 is the C2 PI3K-type domain; the sequence is LHSHLSFTVC…TPLTLQIDFP (149 aa). The 177-residue stretch at 703–879 folds into the PIK helical domain; that stretch reads RTDHQEPPRE…QELLAALQFC (177 aa). The PI3K/PI4K catalytic domain occupies 948–1226; sequence DRDACSYFTS…KIKQSLECFP (279 aa). Positions 954-960 are G-loop; sequence YFTSNAL. Residues 1090–1098 are catalytic loop; it reads GVCDRHNDN. The segment at 1109–1135 is activation loop; sequence HIDFGKFLGHAQTFGGIKRDRAPFIFT. Positions 1259-1371 constitute a PX domain; the sequence is LNKTRTIQRV…SFFLSEHIQQ (113 aa). In terms of domain architecture, C2 spans 1384–1505; it reads HSPDKSPQVQ…KWYPLGNSII (122 aa).

This sequence belongs to the PI3/PI4-kinase family. As to expression, predominantly expressed in normal liver. High levels also found in regenerating liver. Very low levels found in heart and testis.

It is found in the membrane. The catalysed reaction is a 1,2-diacyl-sn-glycero-3-phospho-(1D-myo-inositol) + ATP = a 1,2-diacyl-sn-glycero-3-phospho-(1D-myo-inositol-3-phosphate) + ADP + H(+). It catalyses the reaction a 1,2-diacyl-sn-glycero-3-phospho-(1D-myo-inositol 4-phosphate) + ATP = a 1,2-diacyl-sn-glycero-3-phospho-(1D-myo-inositol-3,4-bisphosphate) + ADP + H(+). Generates phosphatidylinositol 3-phosphate (PtdIns3P) and phosphatidylinositol 3,4-bisphosphate (PtdIns(3,4)P2) that act as second messengers. May play a role in SDF1A-stimulated chemotaxis. This is Phosphatidylinositol 3-kinase C2 domain-containing subunit gamma (Pik3c2g) from Rattus norvegicus (Rat).